The primary structure comprises 288 residues: Energy-coupling factor transporter ATP-binding protein EcfA2 (288 aa).

One can recognise an ABC transporter domain in the interval 2 to 244 (IKFEKVNYTY…VDFLKAHELG (243 aa)). Residue 39 to 46 (GHTGSGKS) coordinates ATP. Glutamate 170 functions as the Proton acceptor in the catalytic mechanism.

It belongs to the ABC transporter superfamily. Energy-coupling factor EcfA family. Forms a stable energy-coupling factor (ECF) transporter complex composed of 2 membrane-embedded substrate-binding proteins (S component), 2 ATP-binding proteins (A component) and 2 transmembrane proteins (T component). In L.lactis forms a stable complex with EcfA' and EcfT and substrate-binding components. In E.coli forms a stable complex with EcfA, EcfT and individually with 3 tested substrate-binding components (BioY, NiaX and ThiT) with a stoichiometry of 1.1:1:1. The core ECF complex interacts with a number of substrate-specific binding components, including BioY, BioY2, HmpT, NiaX, PanT, QueT, RibU and ThiT.

It is found in the cell membrane. In terms of biological role, ATP-binding (A) component of a common energy-coupling factor (ECF) ABC-transporter complex. Unlike classic ABC transporters this ECF transporter provides the energy necessary to transport a number of different substrates. In this organism these probably include biotin, thiamine precursor, niacin, pantothenic acid, queuosine precursor, riboflavin and thiamine. Uptake of niacin or riboflavin into proteosomes containing EcfA1A2T and Niax or RibU has been demonstrated. Uptake requires hydrolyzable Mg-ATP and is substrate-specific; NiaX-containing proteosomes did not transport riboflavin. This chain is Energy-coupling factor transporter ATP-binding protein EcfA2, found in Lactococcus lactis subsp. cremoris (strain MG1363).